We begin with the raw amino-acid sequence, 481 residues long: tRNA pseudouridine(38/39) synthase (481 aa).

Residue Ala2 is modified to N-acetylalanine. A compositionally biased stretch (basic and acidic residues) spans 29–40 (KKEQANNKDSNI). The interval 29-54 (KKEQANNKDSNIRENSSGAGGKPKRA) is disordered. Residue Asp118 is the Nucleophile of the active site. Position 195 (Tyr195) interacts with substrate. The residue at position 456 (Thr456) is a Phosphothreonine.

The protein belongs to the tRNA pseudouridine synthase TruA family.

The protein resides in the nucleus. It carries out the reaction uridine(38/39) in tRNA = pseudouridine(38/39) in tRNA. In terms of biological role, formation of pseudouridine at position 39 in the anticodon stem and loop of transfer RNAs. This chain is tRNA pseudouridine(38/39) synthase (PUS3), found in Bos taurus (Bovine).